We begin with the raw amino-acid sequence, 219 residues long: Orotate phosphoribosyltransferase (219 aa).

K26 is a binding site for 5-phospho-alpha-D-ribose 1-diphosphate. Orotate is bound at residue 34-35 (FF). Residues 72–73 (YK), R98, K99, K102, H104, and 124–132 (DDVITAGTA) contribute to the 5-phospho-alpha-D-ribose 1-diphosphate site. T128 and R156 together coordinate orotate.

This sequence belongs to the purine/pyrimidine phosphoribosyltransferase family. PyrE subfamily. In terms of assembly, homodimer. Requires Mg(2+) as cofactor.

It carries out the reaction orotidine 5'-phosphate + diphosphate = orotate + 5-phospho-alpha-D-ribose 1-diphosphate. Its pathway is pyrimidine metabolism; UMP biosynthesis via de novo pathway; UMP from orotate: step 1/2. Functionally, catalyzes the transfer of a ribosyl phosphate group from 5-phosphoribose 1-diphosphate to orotate, leading to the formation of orotidine monophosphate (OMP). This Xanthomonas oryzae pv. oryzae (strain MAFF 311018) protein is Orotate phosphoribosyltransferase.